The chain runs to 408 residues: MSLSVTRENFDEWMVPVYVPAPFIPVRGEGSRLWDQQGKEYIDFAGGIAVNALGHAHPALREALNEQANRFWHTGNGYTNEPALRLAKKLIDATFAERVFFCNSGAEANEAALKLARKYAHDRIGNHKSGIVAFKNAFHGRTLFTVSAGGQPSYSQDFAPLPPDIRHAAYNDLNSASALIDDNTCAVIVEPVQGEGGVIPATKAFLQGLRELCDRHQALLIFDEVQTGVGRTGELYAYMHYGVTPDILTTAKALGGGFPIGAMLTTQDYASVMTPGTHGTTYGGNPLATAVAGKVLDIINTPEMQNGVRQRHDAFIERLNTINVRFGMFSEIRGLGLLLGCVLQTEFAGKAKLIAQEAAKAGVMVLIAGGDVVRFAPALNVSDEEIATGLDRFALACERLQTGGAPCG.

Lysine 252 carries the N6-(pyridoxal phosphate)lysine modification.

Belongs to the class-III pyridoxal-phosphate-dependent aminotransferase family. AstC subfamily. Pyridoxal 5'-phosphate is required as a cofactor.

The catalysed reaction is N(2)-succinyl-L-ornithine + 2-oxoglutarate = N-succinyl-L-glutamate 5-semialdehyde + L-glutamate. It functions in the pathway amino-acid degradation; L-arginine degradation via AST pathway; L-glutamate and succinate from L-arginine: step 3/5. In terms of biological role, catalyzes the transamination of N(2)-succinylornithine and alpha-ketoglutarate into N(2)-succinylglutamate semialdehyde and glutamate. Can also act as an acetylornithine aminotransferase. The polypeptide is Succinylornithine transaminase (Salmonella paratyphi B (strain ATCC BAA-1250 / SPB7)).